Here is a 257-residue protein sequence, read N- to C-terminus: Imidazole glycerol phosphate synthase subunit HisF (257 aa).

Catalysis depends on residues aspartate 12 and aspartate 131.

This sequence belongs to the HisA/HisF family. In terms of assembly, heterodimer of HisH and HisF.

It is found in the cytoplasm. The catalysed reaction is 5-[(5-phospho-1-deoxy-D-ribulos-1-ylimino)methylamino]-1-(5-phospho-beta-D-ribosyl)imidazole-4-carboxamide + L-glutamine = D-erythro-1-(imidazol-4-yl)glycerol 3-phosphate + 5-amino-1-(5-phospho-beta-D-ribosyl)imidazole-4-carboxamide + L-glutamate + H(+). Its pathway is amino-acid biosynthesis; L-histidine biosynthesis; L-histidine from 5-phospho-alpha-D-ribose 1-diphosphate: step 5/9. IGPS catalyzes the conversion of PRFAR and glutamine to IGP, AICAR and glutamate. The HisF subunit catalyzes the cyclization activity that produces IGP and AICAR from PRFAR using the ammonia provided by the HisH subunit. This Rhodococcus jostii (strain RHA1) protein is Imidazole glycerol phosphate synthase subunit HisF.